We begin with the raw amino-acid sequence, 150 residues long: uncharacterized protein (150 aa).

Residues 19–39 (SLGMCVILIDGLIVLTAAFVF) form a helical membrane-spanning segment.

It to B.subtilis YpjC, YqfU and YitT.

It is found in the cell membrane. This is an uncharacterized protein from Bacillus sp. (strain PS3).